A 260-amino-acid polypeptide reads, in one-letter code: Ubiquinone/menaquinone biosynthesis C-methyltransferase UbiE (260 aa).

S-adenosyl-L-methionine-binding positions include T83, D104, 132 to 133 (NA), and S149.

This sequence belongs to the class I-like SAM-binding methyltransferase superfamily. MenG/UbiE family.

It catalyses the reaction a 2-demethylmenaquinol + S-adenosyl-L-methionine = a menaquinol + S-adenosyl-L-homocysteine + H(+). The catalysed reaction is a 2-methoxy-6-(all-trans-polyprenyl)benzene-1,4-diol + S-adenosyl-L-methionine = a 5-methoxy-2-methyl-3-(all-trans-polyprenyl)benzene-1,4-diol + S-adenosyl-L-homocysteine + H(+). It participates in quinol/quinone metabolism; menaquinone biosynthesis; menaquinol from 1,4-dihydroxy-2-naphthoate: step 2/2. It functions in the pathway cofactor biosynthesis; ubiquinone biosynthesis. In terms of biological role, methyltransferase required for the conversion of demethylmenaquinol (DMKH2) to menaquinol (MKH2) and the conversion of 2-polyprenyl-6-methoxy-1,4-benzoquinol (DDMQH2) to 2-polyprenyl-3-methyl-6-methoxy-1,4-benzoquinol (DMQH2). The protein is Ubiquinone/menaquinone biosynthesis C-methyltransferase UbiE of Vibrio cholerae serotype O1 (strain ATCC 39315 / El Tor Inaba N16961).